Here is a 294-residue protein sequence, read N- to C-terminus: Cytidine deaminase (294 aa).

2 consecutive CMP/dCMP-type deaminase domains span residues 48–168 (NDDE…FGPK) and 187–294 (DNTS…RVTL). A substrate-binding site is contributed by 89–91 (NME). His-102 contacts Zn(2+). Catalysis depends on Glu-104, which acts as the Proton donor. Positions 129 and 132 each coordinate Zn(2+).

Belongs to the cytidine and deoxycytidylate deaminase family. As to quaternary structure, homodimer. Zn(2+) is required as a cofactor.

It carries out the reaction cytidine + H2O + H(+) = uridine + NH4(+). The enzyme catalyses 2'-deoxycytidine + H2O + H(+) = 2'-deoxyuridine + NH4(+). This enzyme scavenges exogenous and endogenous cytidine and 2'-deoxycytidine for UMP synthesis. This chain is Cytidine deaminase, found in Proteus mirabilis (strain HI4320).